Reading from the N-terminus, the 373-residue chain is Secondary metabolism regulator laeA (373 aa).

The tract at residues 55–81 (ERDPAAGRWHANGSPSINSTSSKNPDR) is disordered. The span at 67-77 (GSPSINSTSSK) shows a compositional bias: polar residues.

This sequence belongs to the methyltransferase superfamily. LaeA methyltransferase family. In terms of assembly, component of the heterotrimeric velvet complex composed of laeA, veA and velB; VeA acting as a bridging protein between laeA and velB.

It is found in the nucleus. It carries out the reaction L-methionyl-[protein] + S-adenosyl-L-methionine = S-methyl-L-methionyl-[protein] + S-adenosyl-L-homocysteine. Methyltransferase that performs automethylation. No other methyl-accepting substrate has been identified yet. Component of the velvet transcription factor complex that acts as a global regulator for secondary metabolite gene expression. Positively controls expression of 20% to 40% of major classes of secondary metabolite biosynthesis genes such as nonribosomal peptide synthetases, polyketide synthases, and P450 monooxygenases. Controls the expression of the gliotoxin gene cluster. Controls the expression of the fumitremorgin, fumagillin, and pseurotin gene clusters, where genes for fumagillin and pseurotin are physically intertwined in a single supercluster. Regulates the biosynthetic genes required for endocrocin production. Secondary metabolites under the transcriptional regulation of laeA are necessary for inhibition of angiogenesis during invasive infection in mice. Controls the expression of cell surface rodA, a hydrophobin that acts as an antiphagocytic molecule. Also regulates the expression of genes involved in conidial biosynthesis. This is Secondary metabolism regulator laeA from Aspergillus fumigatus (strain ATCC MYA-4609 / CBS 101355 / FGSC A1100 / Af293) (Neosartorya fumigata).